The following is a 226-amino-acid chain: ATP synthase F(0) complex subunit a (226 aa).

Helical transmembrane passes span 11-31 (SPEL…VLLI), 37-54 (LLGN…MTIM), 72-92 (LTSL…PYTF), 98-118 (LSMN…TGMT), 138-158 (IPFM…ALGV), 178-198 (TLNF…LLFL), and 199-219 (LCIL…LLII).

It belongs to the ATPase A chain family. In terms of assembly, component of the ATP synthase complex composed at least of ATP5F1A/subunit alpha, ATP5F1B/subunit beta, ATP5MC1/subunit c (homooctomer), MT-ATP6/subunit a, MT-ATP8/subunit 8, ATP5ME/subunit e, ATP5MF/subunit f, ATP5MG/subunit g, ATP5MK/subunit k, ATP5MJ/subunit j, ATP5F1C/subunit gamma, ATP5F1D/subunit delta, ATP5F1E/subunit epsilon, ATP5PF/subunit F6, ATP5PB/subunit b, ATP5PD/subunit d, ATP5PO/subunit OSCP. ATP synthase complex consists of a soluble F(1) head domain (subunits alpha(3) and beta(3)) - the catalytic core - and a membrane F(0) domain - the membrane proton channel (subunits c, a, 8, e, f, g, k and j). These two domains are linked by a central stalk (subunits gamma, delta, and epsilon) rotating inside the F1 region and a stationary peripheral stalk (subunits F6, b, d, and OSCP). Interacts with DNAJC30; interaction is direct.

It is found in the mitochondrion inner membrane. It carries out the reaction H(+)(in) = H(+)(out). In terms of biological role, subunit a, of the mitochondrial membrane ATP synthase complex (F(1)F(0) ATP synthase or Complex V) that produces ATP from ADP in the presence of a proton gradient across the membrane which is generated by electron transport complexes of the respiratory chain. ATP synthase complex consist of a soluble F(1) head domain - the catalytic core - and a membrane F(1) domain - the membrane proton channel. These two domains are linked by a central stalk rotating inside the F(1) region and a stationary peripheral stalk. During catalysis, ATP synthesis in the catalytic domain of F(1) is coupled via a rotary mechanism of the central stalk subunits to proton translocation. With the subunit c (ATP5MC1), forms the proton-conducting channel in the F(0) domain, that contains two crucial half-channels (inlet and outlet) that facilitate proton movement from the mitochondrial intermembrane space (IMS) into the matrix. Protons are taken up via the inlet half-channel and released through the outlet half-channel, following a Grotthuss mechanism. The protein is ATP synthase F(0) complex subunit a of Lycodon semicarinatus (Ryukyu odd-tooth snake).